Reading from the N-terminus, the 798-residue chain is Integrin beta-1-A (798 aa).

Residues 1–21 (MAHYPVFTVGLLTCLVLCINA) form the signal peptide. Topologically, residues 22 to 727 (QQGGTECLKA…VKEPECPSGP (706 aa)) are extracellular. A PSI domain is found at 27–77 (ECLKANAKSCGECIQAGPNCGWCTKVDFLQEGEPTSARCDDLAALKSKGCP). 28 disulfides stabilise this stretch: cysteine 28–cysteine 46, cysteine 36–cysteine 464, cysteine 39–cysteine 65, cysteine 49–cysteine 76, cysteine 206–cysteine 212, cysteine 260–cysteine 300, cysteine 400–cysteine 414, cysteine 434–cysteine 462, cysteine 466–cysteine 486, cysteine 477–cysteine 489, cysteine 491–cysteine 500, cysteine 502–cysteine 533, cysteine 516–cysteine 531, cysteine 525–cysteine 536, cysteine 538–cysteine 553, cysteine 555–cysteine 576, cysteine 560–cysteine 574, cysteine 568–cysteine 579, cysteine 581–cysteine 590, cysteine 592–cysteine 615, cysteine 599–cysteine 613, cysteine 607–cysteine 618, cysteine 620–cysteine 630, cysteine 633–cysteine 636, cysteine 640–cysteine 691, cysteine 646–cysteine 665, cysteine 649–cysteine 661, and cysteine 699–cysteine 723. The segment at 76–106 (CPEDDIQNPRGRKQKLKDIPITSKGKGERMD) is disordered. Asparagine 109 and asparagine 131 each carry an N-linked (GlcNAc...) asparagine glycan. A VWFA domain is found at 139–377 (DYPIDLYYLM…QLIIDSYNSL (239 aa)). Mg(2+) contacts are provided by serine 151 and serine 153. Residues serine 153, aspartate 156, aspartate 157, and glutamate 188 each contribute to the Ca(2+) site. 2 N-linked (GlcNAc...) asparagine glycosylation sites follow: asparagine 211 and asparagine 223. Residues asparagine 243, aspartate 245, proline 247, and glutamate 248 each contribute to the Ca(2+) site. Residue glutamate 248 participates in Mg(2+) binding. N-linked (GlcNAc...) asparagine glycans are attached at residues asparagine 268 and asparagine 362. N-linked (GlcNAc...) asparagine glycosylation is present at asparagine 416. 4 consecutive I-EGF domains span residues 466–501 (CQDK…KECE), 502–554 (CSTD…KYCE), 555–591 (CDNF…SACD), and 592–631 (CSED…PTCE). Asparagine 481 is a glycosylation site (N-linked (GlcNAc...) asparagine). Asparagine 520 carries N-linked (GlcNAc...) asparagine glycosylation. Asparagine 584 carries N-linked (GlcNAc...) asparagine glycosylation. The N-linked (GlcNAc...) asparagine glycan is linked to asparagine 669. A helical membrane pass occupies residues 728-751 (DIIPIVAGVVAGIVLIGLALLLIW). At 752–798 (KLLMIIHDRREFAKFEKEKMNAKWDTGENPIYKSAVTTVVNPKYEGK) the chain is on the cytoplasmic side. At tyrosine 783 the chain carries Phosphotyrosine.

Belongs to the integrin beta chain family. Heterodimer of an alpha and a beta subunit.

Its subcellular location is the cell membrane. The protein localises to the cell projection. It localises to the invadopodium membrane. The protein resides in the ruffle membrane. It is found in the melanosome. Its subcellular location is the cleavage furrow. The protein localises to the lamellipodium. It localises to the ruffle. In terms of biological role, beta integrins associate with alpha subunits to form receptor complexes that recognize the sequence R-G-D in a wide array of ligands. May be involved in osteoblast compaction. May play role in myoblast differentiation and fusion during skeletal myogenesis. In Xenopus laevis (African clawed frog), this protein is Integrin beta-1-A (itgb1-a).